A 122-amino-acid chain; its full sequence is Sterile alpha motif domain-containing protein 13 (122 aa).

One can recognise an SAM domain in the interval 51-119 (WAVMDVVNYF…KPLQTKHLKN (69 aa)).

The chain is Sterile alpha motif domain-containing protein 13 (SAMD13) from Homo sapiens (Human).